The sequence spans 146 residues: Leghemoglobin Lb120-29 (146 aa).

In terms of domain architecture, Globin spans G2–S146. Y24 and Y29 each carry nitrated tyrosine. S44 lines the heme b pocket. S44 is subject to Phosphoserine. H61 lines the O2 pocket. Positions 64, 93, and 96 each coordinate heme b. Y134 carries the nitrated tyrosine modification.

This sequence belongs to the plant globin family. As to quaternary structure, monomer. Post-translationally, nitrated in effective nodules and particularly in hypoxic conditions; this mechanism may play a protective role in the symbiosis by buffering toxic peroxynitrite NO(2)(-). Nitration level decrease during nodule senescence. Phosphorylation at Ser-44 disrupts the molecular environment of its porphyrin ring oxygen binding pocket, thus leading to a reduced oxygen consumption and to the delivery of oxygen O(2) to symbiosomes. Root nodules.

It is found in the cytoplasm. It localises to the cytosol. Its subcellular location is the nucleus. Leghemoglobin that reversibly binds oxygen O(2) through a pentacoordinated heme iron. In root nodules, facilitates the diffusion of oxygen to the bacteroids while preventing the bacterial nitrogenase from being inactivated by buffering dioxygen, nitric oxide and carbon monoxide, and promoting the formation of reactive oxygen species (ROS, e.g. H(2)O(2)). This role is essential for symbiotic nitrogen fixation (SNF). The chain is Leghemoglobin Lb120-29 from Pisum sativum (Garden pea).